Reading from the N-terminus, the 186-residue chain is Allergen Fel d 4 (186 aa).

Positions 1–15 are cleaved as a signal peptide; the sequence is MKLLLLCLGLILVCA. N-linked (GlcNAc...) asparagine glycans are attached at residues Asn-51 and Asn-66. Cysteines 81 and 171 form a disulfide.

It belongs to the calycin superfamily. Lipocalin family. In terms of tissue distribution, abundant in urine (at protein level).

It localises to the secreted. Its function is as follows. May be a pheromone carrier. Acts as a kairomone, detected by the prey vomeronasal organ and inducing fear reactions in mice. The polypeptide is Allergen Fel d 4 (Felis catus (Cat)).